We begin with the raw amino-acid sequence, 251 residues long: Duodenase-1 (251 aa).

The first 17 residues, 1–17, serve as a signal peptide directing secretion; the sequence is MVLLLLLVALLSPTGEA. Residues 18–19 constitute a propeptide that is removed on maturation; that stretch reads GK. In terms of domain architecture, Peptidase S1 spans 20 to 242; that stretch reads IIGGHEAKPH…SFLSWIHSTM (223 aa). A disulfide bridge connects residues Cys-48 and Cys-64. His-63 (charge relay system) is an active-site residue. N-linked (GlcNAc...) asparagine glycosylation occurs at Asn-70. Catalysis depends on Asp-107, which acts as the Charge relay system. 2 disulfides stabilise this stretch: Cys-141–Cys-207 and Cys-172–Cys-186. Ser-201 functions as the Charge relay system in the catalytic mechanism.

It belongs to the peptidase S1 family. Monomer.

Functionally, protease which has both trypsin-like and chymotrypsin-like activities. Shows a preferential cleavage after Lys, Arg, Tyr, Phe, and Leu residues. The polypeptide is Duodenase-1 (BDMD1) (Bos taurus (Bovine)).